Here is a 340-residue protein sequence, read N- to C-terminus: Citramalyl-CoA lyase, mitochondrial (340 aa).

Residues 1-22 (MALRLLRRAARGAAAAALLRLK) constitute a mitochondrion transit peptide. 3 residues coordinate substrate: Y50, K57, and K61. N6-acetyllysine occurs at positions 57 and 61. An N6-acetyllysine; alternate mark is found at K82 and K92. K82 and K92 each carry N6-succinyllysine; alternate. Position 107 (R107) interacts with substrate. The Mg(2+) site is built by E171 and D206. Residue 272–273 (IH) participates in substrate binding. K309 carries the post-translational modification N6-succinyllysine. D320 is an active-site residue.

This sequence belongs to the HpcH/HpaI aldolase family. Citrate lyase beta subunit-like subfamily. Homotrimer. The cofactor is Mg(2+).

Its subcellular location is the mitochondrion. The enzyme catalyses glyoxylate + acetyl-CoA + H2O = (S)-malate + CoA + H(+). It catalyses the reaction propanoyl-CoA + glyoxylate + H2O = 3-methylmalate + CoA + H(+). It carries out the reaction (3S)-citramalyl-CoA = pyruvate + acetyl-CoA. The catalysed reaction is (S)-malyl-CoA + H2O = (S)-malate + CoA + H(+). Functionally, mitochondrial citramalyl-CoA lyase indirectly involved in the vitamin B12 metabolism. Converts citramalyl-CoA into acetyl-CoA and pyruvate in the C5-dicarboxylate catabolism pathway. The C5-dicarboxylate catabolism pathway is required to detoxify itaconate, a vitamin B12-poisoning metabolite. Also acts as a malate synthase in vitro, converting glyoxylate and acetyl-CoA to malate. Also displays malyl-CoA thioesterase activity. Also acts as a beta-methylmalate synthase in vitro, by mediating conversion of glyoxylate and propionyl-CoA to beta-methylmalate. Also has very weak citramalate synthase activity in vitro. This chain is Citramalyl-CoA lyase, mitochondrial, found in Homo sapiens (Human).